Here is a 141-residue protein sequence, read N- to C-terminus: Small ribosomal subunit protein uS9c (141 aa).

It belongs to the universal ribosomal protein uS9 family.

The protein resides in the plastid. The protein localises to the chloroplast. The sequence is that of Small ribosomal subunit protein uS9c (rps9) from Tupiella akineta (Green alga).